The sequence spans 1382 residues: Suppressor of organelle fusion 2 (1382 aa).

Positions 229 to 463 (RIPLDEATSN…QLFNRPHPIR (235 aa)) constitute a BEACH domain. WD repeat units lie at residues 1094 to 1133 (GHQEKIRKLAAISNENSFVSASSDKTVKLWSIKPELDEIG) and 1140 to 1176 (KHTRPVHDITILADNSIASTDGVLHVWDPFRTTLLAQ).

The protein belongs to the WD repeat WDR81 family. Interacts with sorf-1; the interaction is direct. Interacts with bec-1.

The protein resides in the early endosome. It localises to the late endosome. The protein localises to the cytoplasm. Its function is as follows. Together with sorf-1 negatively regulates the levels of phosphatidylinositol 3-phosphate (PtdIns3P) to enable the conversion of early endosomes to late endosomes. Binds to sorf-1 and the sorf-1-sorf-2 complex likely acts through bec-1, a non-catalytic subunit of phosphatidylinositol 3-kinase (PI3K), to suppress PI3K activity, thereby negatively regulating endosomal PtdIns3P levels. The polypeptide is Suppressor of organelle fusion 2 (Caenorhabditis elegans).